A 507-amino-acid polypeptide reads, in one-letter code: ESX-5 secretion system ATPase EccB5 (507 aa).

The helical transmembrane segment at 56 to 76 threads the bilayer; it reads VVASVSAALVICLGSLLWSFI.

It belongs to the EccB family. As to quaternary structure, part of the ESX-5 / type VII secretion system (T7SS), which is composed of cytosolic and membrane components. The ESX-5 membrane complex is composed of EccB5, EccC5, EccD5 and EccE5.

It localises to the cell inner membrane. In terms of biological role, an ATPase. Part of the ESX-5 specialized secretion system, which is responsible for the secretion of EsxN and a number of PE_PGRS and PPE proteins. The protein is ESX-5 secretion system ATPase EccB5 of Mycobacterium marinum (strain ATCC BAA-535 / M).